The primary structure comprises 193 residues: Dirigent protein 11 (193 aa).

The first 33 residues, 1 to 33, serve as a signal peptide directing secretion; it reads MLQITNMATPFLLLLLPLIFSTVLLLTITVTQS. N-linked (GlcNAc...) asparagine glycans are attached at residues N78 and N136.

It belongs to the plant dirigent protein family. As to quaternary structure, homodimer.

Its subcellular location is the secreted. It is found in the extracellular space. The protein localises to the apoplast. In terms of biological role, dirigent proteins impart stereoselectivity on the phenoxy radical-coupling reaction, yielding optically active lignans from two molecules of coniferyl alcohol in the biosynthesis of lignans, flavonolignans, and alkaloids and thus plays a central role in plant secondary metabolism. This chain is Dirigent protein 11 (DIR11), found in Arabidopsis thaliana (Mouse-ear cress).